The chain runs to 551 residues: Cleavage and polyadenylation specificity factor subunit 6 (551 aa).

Positions 1 to 213 (MADGVDHIDI…RGRFPGAVPG (213 aa)) are necessary for interaction with NXF1. An RRM domain is found at 81-161 (IALYIGNLTW…QSPVVTPCNK (81 aa)). A necessary for interaction with NUDT21/CPSF5 region spans residues 81-161 (IALYIGNLTW…QSPVVTPCNK (81 aa)). Residues 81–161 (IALYIGNLTW…QSPVVTPCNK (81 aa)) form a necessary for nuclear paraspeckles localization region. Threonine 157 is modified (phosphothreonine). Polar residues predominate over residues 169-180 (MQSRKTTQSGQM). Disordered regions lie at residues 169–411 (MQSR…PLSE) and 477–551 (LHGI…YRHR). Positions 184 to 193 (GKAGPPGGGS) are enriched in gly residues. The GAR signature appears at 202 to 206 (RGRGR). Residues 207–219 (FPGAVPGGDRFPG) are compositionally biased toward low complexity. Pro residues-rich tracts occupy residues 220–265 (PAGP…PLAG), 285–366 (GQPP…PPPT), and 377–388 (GPPPTDPYGRPP). Basic and acidic residues predominate over residues 389-404 (PYDRGDYGPPGREMDT). Residues threonine 404 and threonine 407 each carry the phosphothreonine modification. A sufficient for nuclear speckle localization region spans residues 404–551 (TARTPLSEAE…RDREREYRHR (148 aa)). The interval 405–551 (ARTPLSEAEF…RDREREYRHR (147 aa)) is necessary for RNA-binding. The segment at 481 to 551 (ESKSYGSGSR…RDREREYRHR (71 aa)) is necessary for interaction with SRSF3, SRSF7 and TRA2B/SFRS10. Over residues 489–503 (SRRERSRERDHSRSR) the composition is skewed to basic and acidic residues. An arg/Ser-rich domain region spans residues 490 to 551 (RRERSRERDH…RDREREYRHR (62 aa)). Residues serine 494, serine 500, serine 511, serine 513, and serine 525 each carry the phosphoserine modification. Over residues 504–514 (EKSRRHKSRSR) the composition is skewed to basic residues. Positions 510 to 551 (KSRSRDRHDDYYRERSRERERHRDRDRDRDRERDREREYRHR) are sufficient for nuclear targeting. Over residues 515–551 (DRHDDYYRERSRERERHRDRDRDRDRERDREREYRHR) the composition is skewed to basic and acidic residues.

Belongs to the RRM CPSF6/7 family. Component of the cleavage factor Im (CFIm) complex which is a heterotetramer composed of two subunits of NUDT21/CPSF5 and two subunits of CPSF6 or CPSF7 or a heterodimer of CPSF6 and CPSF7. The cleavage factor Im (CFIm) complex associates with the CPSF and CSTF complexes to promote the assembly of the core mRNA 3'-processing machinery. Associates with the exon junction complex (EJC). Associates with the 80S ribosome particle. Interacts (via the RRM domain) with NUDT21/CPSF5; this interaction is direct and enhances binding to RNA. Interacts (via Arg/Ser-rich domain) with FIP1L1 (preferentially via unphosphorylated form and Arg/Glu/Asp-rich domain); this interaction mediates, at least in part, the interaction between the CFIm and CPSF complexes and may be inhibited by CPSF6 hyper-phosphorylation. Interacts (via N-terminus) with NXF1; this interaction is direct. Interacts with SRSF3. Interacts with SRSF7. Interacts with SNRNP70. Interacts with TRA2B/SFRS10. Interacts with UPF1. Interacts with UPF3B. Interacts with VIRMA. Interacts (via Arg/Ser-rich domain) with TNPO3; promoting nuclear import of CPSF6 independently of its phosphorylation status. Interacts with YTHDC1. Post-translationally, phosphorylated. Phosphorylated in the Arg/Ser-rich domain by SRPK1, in vitro. In terms of processing, symmetrically dimethylated on arginine residues by PRMT5 in a WDR77- and CLNS1A-dependent manner. Asymmetrically dimethylated on arginine residues by PRMT1. Symmetrically dimethylated on arginine residues in the GAR motif by PRMT5 in a WDR77- and CLNS1A-dependent manner. Asymmetrically dimethylated on arginine residues in the GAR motif by PRMT1. In terms of tissue distribution, expressed in testis. Expressed in male germ cells (at protein level).

Its subcellular location is the nucleus. It is found in the nucleoplasm. It localises to the nucleus speckle. The protein resides in the cytoplasm. Its function is as follows. Component of the cleavage factor Im (CFIm) complex that functions as an activator of the pre-mRNA 3'-end cleavage and polyadenylation processing required for the maturation of pre-mRNA into functional mRNAs. CFIm contributes to the recruitment of multiprotein complexes on specific sequences on the pre-mRNA 3'-end, so called cleavage and polyadenylation signals (pA signals). Most pre-mRNAs contain multiple pA signals, resulting in alternative cleavage and polyadenylation (APA) producing mRNAs with variable 3'-end formation. The CFIm complex acts as a key regulator of cleavage and polyadenylation site choice during APA through its binding to 5'-UGUA-3' elements localized in the 3'-untranslated region (UTR) for a huge number of pre-mRNAs. CPSF6 enhances NUDT21/CPSF5 binding to 5'-UGUA-3' elements localized upstream of pA signals and promotes RNA looping, and hence activates directly the mRNA 3'-processing machinery. Plays a role in mRNA export. This is Cleavage and polyadenylation specificity factor subunit 6 from Mus musculus (Mouse).